The chain runs to 426 residues: D-tagatose-1,6-bisphosphate aldolase subunit KbaZ (426 aa).

This sequence belongs to the GatZ/KbaZ family. KbaZ subfamily. Forms a complex with KbaY.

Its pathway is carbohydrate metabolism; D-tagatose 6-phosphate degradation; D-glyceraldehyde 3-phosphate and glycerone phosphate from D-tagatose 6-phosphate: step 2/2. Its function is as follows. Component of the tagatose-1,6-bisphosphate aldolase KbaYZ that is required for full activity and stability of the Y subunit. Could have a chaperone-like function for the proper and stable folding of KbaY. When expressed alone, KbaZ does not show any aldolase activity. This is D-tagatose-1,6-bisphosphate aldolase subunit KbaZ from Escherichia coli O6:H1 (strain CFT073 / ATCC 700928 / UPEC).